The sequence spans 358 residues: Methylthioribose-1-phosphate isomerase (358 aa).

Residues Cys54 to Ala56 and Gln205 each bind substrate. Asp246 acts as the Proton donor in catalysis. Residue Asn256–Gln257 coordinates substrate.

The protein belongs to the eIF-2B alpha/beta/delta subunits family. MtnA subfamily.

The catalysed reaction is 5-(methylsulfanyl)-alpha-D-ribose 1-phosphate = 5-(methylsulfanyl)-D-ribulose 1-phosphate. Its pathway is amino-acid biosynthesis; L-methionine biosynthesis via salvage pathway; L-methionine from S-methyl-5-thio-alpha-D-ribose 1-phosphate: step 1/6. Functionally, catalyzes the interconversion of methylthioribose-1-phosphate (MTR-1-P) into methylthioribulose-1-phosphate (MTRu-1-P). The polypeptide is Methylthioribose-1-phosphate isomerase (Pseudomonas fluorescens (strain ATCC BAA-477 / NRRL B-23932 / Pf-5)).